Consider the following 345-residue polypeptide: tRNA N6-adenosine threonylcarbamoyltransferase (345 aa).

Residues His111 and His115 each contribute to the Fe cation site. Residues 136-140 (LVSGG), Asp169, Gly182, and Asn279 each bind substrate. Fe cation is bound at residue Asp307.

This sequence belongs to the KAE1 / TsaD family. Fe(2+) serves as cofactor.

The protein localises to the cytoplasm. It catalyses the reaction L-threonylcarbamoyladenylate + adenosine(37) in tRNA = N(6)-L-threonylcarbamoyladenosine(37) in tRNA + AMP + H(+). Functionally, required for the formation of a threonylcarbamoyl group on adenosine at position 37 (t(6)A37) in tRNAs that read codons beginning with adenine. Is involved in the transfer of the threonylcarbamoyl moiety of threonylcarbamoyl-AMP (TC-AMP) to the N6 group of A37, together with TsaE and TsaB. TsaD likely plays a direct catalytic role in this reaction. In Actinobacillus succinogenes (strain ATCC 55618 / DSM 22257 / CCUG 43843 / 130Z), this protein is tRNA N6-adenosine threonylcarbamoyltransferase.